Here is a 524-residue protein sequence, read N- to C-terminus: 5'-AMP-activated protein kinase subunit gamma-2 (524 aa).

The disordered stretch occupies residues 1–178 (MPLLDGDLEG…TRPPLASPTH (178 aa)). Residues serine 21, serine 27, serine 29, serine 46, serine 94, serine 99, serine 117, and serine 118 each carry the phosphoserine modification. The span at 112-123 (TSGLSSSPSTPT) shows a compositional bias: low complexity. Position 121 is a phosphothreonine (threonine 121). A compositionally biased stretch (basic and acidic residues) spans 135–145 (SYKHEPERLEN). Residues 148–168 (YASSSPPDTGQRFCPSSFQSP) show a composition bias toward polar residues. Serine 152 carries the phosphoserine modification. CBS domains follow at residues 230-290 (PTSS…KSPM), 312-370 (TFKP…MSDM), and 385-447 (IGTY…NLDI). ADP contacts are provided by residues arginine 257, 272–277 (MLTITD), valine 317, 338–339 (HR), and lysine 357. AMP-binding positions include arginine 257, 272-277 (MLTITD), valine 317, histidine 338, 338-339 (HR), lysine 357, threonine 387, alanine 392, 413-414 (SA), 429-432 (SKFD), arginine 456, histidine 485, 485-486 (HR), and 501-504 (SLSD). ATP-binding positions include arginine 257, 272–277 (MLTITD), valine 317, 338–339 (HR), arginine 339, and lysine 357. Residues 325-346 (LLDAVYSLIKNKIHRLPVIDPI) carry the AMPK pseudosubstrate motif. ADP-binding positions include 429–432 (SKFD), arginine 456, and 485–486 (HR). ATP is bound by residues 429-432 (SKFD), arginine 456, and 485-486 (HR). In terms of domain architecture, CBS 4 spans 459 to 517 (YFEGVVKCNKLEILETIVDRIVRAEVHRLVVANEADSIVGIISLSDILQALILTPAGAK).

Belongs to the 5'-AMP-activated protein kinase gamma subunit family. In terms of assembly, AMPK is a heterotrimer of an alpha catalytic subunit (PRKAA1 or PRKAA2), a beta (PRKAB1 or PRKAB2) and a gamma non-catalytic subunits (PRKAG1, PRKAG2 or PRKAG3). Interacts with FNIP1 and FNIP2. Post-translationally, phosphorylated by ULK1; leading to negatively regulate AMPK activity and suggesting the existence of a regulatory feedback loop between ULK1 and AMPK. Glycosylated; O-GlcNAcylated by OGT, promoting the AMP-activated protein kinase (AMPK) activity.

In terms of biological role, AMP/ATP-binding subunit of AMP-activated protein kinase (AMPK), an energy sensor protein kinase that plays a key role in regulating cellular energy metabolism. In response to reduction of intracellular ATP levels, AMPK activates energy-producing pathways and inhibits energy-consuming processes: inhibits protein, carbohydrate and lipid biosynthesis, as well as cell growth and proliferation. AMPK acts via direct phosphorylation of metabolic enzymes, and by longer-term effects via phosphorylation of transcription regulators. Also acts as a regulator of cellular polarity by remodeling the actin cytoskeleton; probably by indirectly activating myosin. Gamma non-catalytic subunit mediates binding to AMP, ADP and ATP, leading to activate or inhibit AMPK: AMP-binding results in allosteric activation of alpha catalytic subunit (PRKAA1 or PRKAA2) both by inducing phosphorylation and preventing dephosphorylation of catalytic subunits. ADP also stimulates phosphorylation, without stimulating already phosphorylated catalytic subunit. ATP promotes dephosphorylation of catalytic subunit, rendering the AMPK enzyme inactive. The polypeptide is 5'-AMP-activated protein kinase subunit gamma-2 (PRKAG2) (Pongo abelii (Sumatran orangutan)).